A 127-amino-acid chain; its full sequence is Large ribosomal subunit protein bL12 (127 aa).

This sequence belongs to the bacterial ribosomal protein bL12 family. As to quaternary structure, homodimer. Part of the ribosomal stalk of the 50S ribosomal subunit. Forms a multimeric L10(L12)X complex, where L10 forms an elongated spine to which 2 to 4 L12 dimers bind in a sequential fashion. Binds GTP-bound translation factors.

In terms of biological role, forms part of the ribosomal stalk which helps the ribosome interact with GTP-bound translation factors. Is thus essential for accurate translation. This chain is Large ribosomal subunit protein bL12, found in Carboxydothermus hydrogenoformans (strain ATCC BAA-161 / DSM 6008 / Z-2901).